Here is a 130-residue protein sequence, read N- to C-terminus: Transcription antitermination protein NusB (130 aa).

The protein belongs to the NusB family.

In terms of biological role, involved in transcription antitermination. Required for transcription of ribosomal RNA (rRNA) genes. Binds specifically to the boxA antiterminator sequence of the ribosomal RNA (rrn) operons. The protein is Transcription antitermination protein NusB of Bacillus velezensis (strain DSM 23117 / BGSC 10A6 / LMG 26770 / FZB42) (Bacillus amyloliquefaciens subsp. plantarum).